A 325-amino-acid chain; its full sequence is Beta-ketoacyl-[acyl-carrier-protein] synthase III (325 aa).

Catalysis depends on residues Cys-112 and His-250. An ACP-binding region spans residues 251–255 (QANSR). Asn-280 is a catalytic residue.

The protein belongs to the thiolase-like superfamily. FabH family. In terms of assembly, homodimer.

It localises to the cytoplasm. It catalyses the reaction malonyl-[ACP] + acetyl-CoA + H(+) = 3-oxobutanoyl-[ACP] + CO2 + CoA. Its pathway is lipid metabolism; fatty acid biosynthesis. Its function is as follows. Catalyzes the condensation reaction of fatty acid synthesis by the addition to an acyl acceptor of two carbons from malonyl-ACP. Catalyzes the first condensation reaction which initiates fatty acid synthesis and may therefore play a role in governing the total rate of fatty acid production. Possesses both acetoacetyl-ACP synthase and acetyl transacylase activities. Its substrate specificity determines the biosynthesis of branched-chain and/or straight-chain of fatty acids. This is Beta-ketoacyl-[acyl-carrier-protein] synthase III from Lactococcus lactis subsp. cremoris (strain SK11).